The chain runs to 358 residues: Aminomethyltransferase (358 aa).

It belongs to the GcvT family. As to quaternary structure, the glycine cleavage system is composed of four proteins: P, T, L and H.

The enzyme catalyses N(6)-[(R)-S(8)-aminomethyldihydrolipoyl]-L-lysyl-[protein] + (6S)-5,6,7,8-tetrahydrofolate = N(6)-[(R)-dihydrolipoyl]-L-lysyl-[protein] + (6R)-5,10-methylene-5,6,7,8-tetrahydrofolate + NH4(+). The glycine cleavage system catalyzes the degradation of glycine. The chain is Aminomethyltransferase from Francisella philomiragia subsp. philomiragia (strain ATCC 25017 / CCUG 19701 / FSC 153 / O#319-036).